The primary structure comprises 290 residues: Ribosomal protein L11 methyltransferase (290 aa).

Positions 136, 157, 179, and 222 each coordinate S-adenosyl-L-methionine.

It belongs to the methyltransferase superfamily. PrmA family.

The protein resides in the cytoplasm. It catalyses the reaction L-lysyl-[protein] + 3 S-adenosyl-L-methionine = N(6),N(6),N(6)-trimethyl-L-lysyl-[protein] + 3 S-adenosyl-L-homocysteine + 3 H(+). Functionally, methylates ribosomal protein L11. The polypeptide is Ribosomal protein L11 methyltransferase (Porphyromonas gingivalis (strain ATCC BAA-308 / W83)).